Here is a 193-residue protein sequence, read N- to C-terminus: Xanthine phosphoribosyltransferase (193 aa).

2 residues coordinate xanthine: L20 and T27. A 5-phospho-alpha-D-ribose 1-diphosphate-binding site is contributed by 128-132; sequence ANGQA. K156 contributes to the xanthine binding site.

It belongs to the purine/pyrimidine phosphoribosyltransferase family. Xpt subfamily. As to quaternary structure, homodimer.

It localises to the cytoplasm. The catalysed reaction is XMP + diphosphate = xanthine + 5-phospho-alpha-D-ribose 1-diphosphate. It participates in purine metabolism; XMP biosynthesis via salvage pathway; XMP from xanthine: step 1/1. Functionally, converts the preformed base xanthine, a product of nucleic acid breakdown, to xanthosine 5'-monophosphate (XMP), so it can be reused for RNA or DNA synthesis. The polypeptide is Xanthine phosphoribosyltransferase (Streptococcus pyogenes serotype M49 (strain NZ131)).